The sequence spans 1477 residues: Ring canal kelch protein (1477 aa).

Disordered regions lie at residues 19–62, 76–96, and 108–137; these read LSNG…PGLG, LLQQ…EGSG, and SQNS…YSNE. The segment covering 20 to 46 has biased composition (low complexity); sequence SNGNSNNNNQQQQQQQQGQNPQQPAQN. Phosphoserine is present on residues S108 and S111. The BTB domain maps to 157–223; the sequence is CDVILVADDV…VYTATVEVNE (67 aa). 6 Kelch repeats span residues 404-449, 450-496, 498-543, 545-592, 594-639, and 641-687; these read ILLV…VLGD, KVYA…VLNG, IYAV…VVHG, LYAV…VLNN, LYAV…AHDG, and LYVV…MIDK. A non-standard amino acid (selenocysteine) is located at residue U690. Disordered stretches follow at residues 744 to 841, 1119 to 1200, 1291 to 1326, 1359 to 1416, and 1446 to 1477; these read PAAP…PQRI, HSAA…GNGT, RDAN…QYED, PLLQ…FKPK, and PVSL…EHND. Composition is skewed to low complexity over residues 763–813 and 820–839; these read APIG…ANNN and AAPA…QQPQ. Over residues 1125–1137 the composition is skewed to polar residues; it reads IPSSSNINANRTT. Residues 1166–1192 show a composition bias toward low complexity; the sequence is KTTSTGSGKSVTLAKKTSTAAARSSSS. 2 stretches are compositionally biased toward low complexity: residues 1374–1391 and 1456–1477; these read QQRR…QSQQ and TTSS…EHND.

In terms of tissue distribution, both proteins are expressed in ovaries, male testis, ovariectomized females, cuticle, salivary gland and imaginal disks. Kelch short protein is the predominant form and is also expressed in fat bodies. On entry into metamorphosis levels of full-length protein increase in testis and imaginal disks.

It localises to the cytoplasm. The protein resides in the cytoskeleton. Component of ring canals that regulates the flow of cytoplasm between cells. May be involved in the regulation of cytoplasm flow from nurse cells to the oocyte during oogenesis. Binds actin. The sequence is that of Ring canal kelch protein (kel) from Drosophila melanogaster (Fruit fly).